Here is a 210-residue protein sequence, read N- to C-terminus: FMN-dependent NADH:quinone oxidoreductase (210 aa).

FMN-binding positions include Ser10 and 16-18 (SRS).

Belongs to the azoreductase type 1 family. In terms of assembly, homodimer. Requires FMN as cofactor.

It catalyses the reaction 2 a quinone + NADH + H(+) = 2 a 1,4-benzosemiquinone + NAD(+). The catalysed reaction is N,N-dimethyl-1,4-phenylenediamine + anthranilate + 2 NAD(+) = 2-(4-dimethylaminophenyl)diazenylbenzoate + 2 NADH + 2 H(+). Its function is as follows. Quinone reductase that provides resistance to thiol-specific stress caused by electrophilic quinones. Functionally, also exhibits azoreductase activity. Catalyzes the reductive cleavage of the azo bond in aromatic azo compounds to the corresponding amines. The chain is FMN-dependent NADH:quinone oxidoreductase from Kineococcus radiotolerans (strain ATCC BAA-149 / DSM 14245 / SRS30216).